We begin with the raw amino-acid sequence, 62 residues long: Photosystem II reaction center protein Z (62 aa).

2 helical membrane passes run 8-28 (ALAA…VAYA) and 41-61 (FVGS…NFFV).

Belongs to the PsbZ family. PSII is composed of 1 copy each of membrane proteins PsbA, PsbB, PsbC, PsbD, PsbE, PsbF, PsbH, PsbI, PsbJ, PsbK, PsbL, PsbM, PsbT, PsbX, PsbY, PsbZ, Psb30/Ycf12, peripheral proteins PsbO, CyanoQ (PsbQ), PsbU, PsbV and a large number of cofactors. It forms dimeric complexes.

The protein localises to the cellular thylakoid membrane. In terms of biological role, may control the interaction of photosystem II (PSII) cores with the light-harvesting antenna, regulates electron flow through the 2 photosystem reaction centers. PSII is a light-driven water plastoquinone oxidoreductase, using light energy to abstract electrons from H(2)O, generating a proton gradient subsequently used for ATP formation. In Picosynechococcus sp. (strain ATCC 27264 / PCC 7002 / PR-6) (Agmenellum quadruplicatum), this protein is Photosystem II reaction center protein Z.